The chain runs to 605 residues: SET domain-containing protein SNOG_11806 (605 aa).

Residues 68-132 are disordered; sequence TLDLTGMKTP…SRKGTGGLRV (65 aa). A compositionally biased stretch (polar residues) spans 75–89; sequence KTPQPSRSPTVTRNV. A compositionally biased stretch (acidic residues) spans 104-115; the sequence is ESADDDDDDLQD. The region spanning 473-579 is the SET domain; the sequence is PPVQIYRTAE…AGSEITVDYG (107 aa).

It belongs to the class V-like SAM-binding methyltransferase superfamily.

The polypeptide is SET domain-containing protein SNOG_11806 (Phaeosphaeria nodorum (strain SN15 / ATCC MYA-4574 / FGSC 10173) (Glume blotch fungus)).